The primary structure comprises 164 residues: ATP synthase subunit b (164 aa).

Residues 6–26 (GELVGNFILVTGSVIVLLLLI) traverse the membrane as a helical segment.

The protein belongs to the ATPase B chain family. As to quaternary structure, F-type ATPases have 2 components, F(1) - the catalytic core - and F(0) - the membrane proton channel. F(1) has five subunits: alpha(3), beta(3), gamma(1), delta(1), epsilon(1). F(0) has three main subunits: a(1), b(2) and c(10-14). The alpha and beta chains form an alternating ring which encloses part of the gamma chain. F(1) is attached to F(0) by a central stalk formed by the gamma and epsilon chains, while a peripheral stalk is formed by the delta and b chains.

Its subcellular location is the cell membrane. In terms of biological role, f(1)F(0) ATP synthase produces ATP from ADP in the presence of a proton or sodium gradient. F-type ATPases consist of two structural domains, F(1) containing the extramembraneous catalytic core and F(0) containing the membrane proton channel, linked together by a central stalk and a peripheral stalk. During catalysis, ATP synthesis in the catalytic domain of F(1) is coupled via a rotary mechanism of the central stalk subunits to proton translocation. Its function is as follows. Component of the F(0) channel, it forms part of the peripheral stalk, linking F(1) to F(0). This Streptococcus pyogenes serotype M12 (strain MGAS2096) protein is ATP synthase subunit b.